We begin with the raw amino-acid sequence, 84 residues long: Conotoxin Tx8.1 (84 aa).

The first 19 residues, 1 to 19 (LKMGAMFVLLLLFTLASSH), serve as a signal peptide directing secretion. The propeptide occupies 20–44 (REGDIQARKTHLKSDFYRTLPRFAR).

Belongs to the conotoxin S superfamily. Post-translationally, contains 5 disulfide bonds. As to expression, expressed by the venom duct.

The protein localises to the secreted. This chain is Conotoxin Tx8.1, found in Conus textile (Cloth-of-gold cone).